We begin with the raw amino-acid sequence, 338 residues long: Phosphatidate cytidylyltransferase, mitochondrial (338 aa).

This sequence belongs to the TAM41 family. Mg(2+) serves as cofactor.

It localises to the mitochondrion inner membrane. The catalysed reaction is a 1,2-diacyl-sn-glycero-3-phosphate + CTP + H(+) = a CDP-1,2-diacyl-sn-glycerol + diphosphate. It participates in phospholipid metabolism; CDP-diacylglycerol biosynthesis; CDP-diacylglycerol from sn-glycerol 3-phosphate: step 3/3. Catalyzes the conversion of phosphatidic acid (PA) to CDP-diacylglycerol (CDP-DAG), an essential intermediate in the synthesis of phosphatidylglycerol, cardiolipin and phosphatidylinositol. The protein is Phosphatidate cytidylyltransferase, mitochondrial (tamm41) of Danio rerio (Zebrafish).